Consider the following 211-residue polypeptide: Cytidylate kinase (211 aa).

Residue 7–15 participates in ATP binding; it reads GPAASGKGT.

Belongs to the cytidylate kinase family. Type 1 subfamily.

The protein resides in the cytoplasm. The enzyme catalyses CMP + ATP = CDP + ADP. It carries out the reaction dCMP + ATP = dCDP + ADP. The sequence is that of Cytidylate kinase from Rhodopseudomonas palustris (strain BisA53).